A 201-amino-acid polypeptide reads, in one-letter code: dTTP/UTP pyrophosphatase (201 aa).

Catalysis depends on Asp-81, which acts as the Proton acceptor.

This sequence belongs to the Maf family. YhdE subfamily. Requires a divalent metal cation as cofactor.

It localises to the cytoplasm. It carries out the reaction dTTP + H2O = dTMP + diphosphate + H(+). The enzyme catalyses UTP + H2O = UMP + diphosphate + H(+). Its function is as follows. Nucleoside triphosphate pyrophosphatase that hydrolyzes dTTP and UTP. May have a dual role in cell division arrest and in preventing the incorporation of modified nucleotides into cellular nucleic acids. This is dTTP/UTP pyrophosphatase from Bordetella avium (strain 197N).